A 344-amino-acid polypeptide reads, in one-letter code: tRNA N6-adenosine threonylcarbamoyltransferase (344 aa).

Positions 119 and 123 each coordinate Fe cation. Substrate contacts are provided by residues 141-145 (VVSGG), aspartate 174, glycine 187, aspartate 191, and asparagine 280. Aspartate 310 contacts Fe cation.

Belongs to the KAE1 / TsaD family. Requires Fe(2+) as cofactor.

It is found in the cytoplasm. It carries out the reaction L-threonylcarbamoyladenylate + adenosine(37) in tRNA = N(6)-L-threonylcarbamoyladenosine(37) in tRNA + AMP + H(+). Functionally, required for the formation of a threonylcarbamoyl group on adenosine at position 37 (t(6)A37) in tRNAs that read codons beginning with adenine. Is involved in the transfer of the threonylcarbamoyl moiety of threonylcarbamoyl-AMP (TC-AMP) to the N6 group of A37, together with TsaE and TsaB. TsaD likely plays a direct catalytic role in this reaction. The sequence is that of tRNA N6-adenosine threonylcarbamoyltransferase from Listeria innocua serovar 6a (strain ATCC BAA-680 / CLIP 11262).